Here is a 455-residue protein sequence, read N- to C-terminus: Venom prothrombin activator notecarin-D1 (455 aa).

The N-terminal stretch at 1–20 (MAPQLLLCLILTFLWSLPEA) is a signal peptide. Residues 21-40 (ESNVFLKSKVANRFLQRTKR) constitute a propeptide that is removed on maturation. A Gla domain is found at 41 to 86 (SNSLFEEIRPGNIERECIEEKCSKEEAREVFEDNEKTETFWNVYVD). 4-carboxyglutamate is present on residues Glu-46, Glu-47, Glu-54, Glu-56, Glu-59, Glu-60, Glu-65, Glu-66, Glu-69, Glu-72, and Glu-75. Residues Cys-57 and Cys-62 are joined by a disulfide bond. One can recognise an EGF-like 1; calcium-binding domain in the interval 86–122 (DGDQCSSNPCHYRGTCKDGIGSYTCTCLPNYEGKNCE). Disulfide bonds link Cys-90/Cys-101, Cys-95/Cys-110, Cys-112/Cys-121, Cys-129/Cys-140, Cys-136/Cys-149, Cys-151/Cys-164, Cys-172/Cys-328, Cys-216/Cys-221, Cys-236/Cys-252, Cys-376/Cys-390, and Cys-401/Cys-429. A glycan (O-linked (Hex...) serine) is linked at Ser-92. Residues 129-164 (CRVDNGNCWHFCKRVQSETQCSCAESYRLGVDGHSC) enclose the EGF-like 2 domain. The propeptide at 182–209 (REASLPDFVQSQKATLLKKSDNPSPDIR) is activation peptide. A Peptidase S1 domain is found at 210-453 (IVNGMDCKLG…FIPWIKKIMS (244 aa)). Catalysis depends on His-251, which acts as the Charge relay system. Asn-254 carries an N-linked (GlcNAc...) asparagine glycan. Asp-308 serves as the catalytic Charge relay system. Ser-405 serves as the catalytic Charge relay system.

It belongs to the peptidase S1 family. Snake venom subfamily. As to quaternary structure, heterodimer of a light chain and a heavy chain; disulfide-linked. Post-translationally, gamma-carboxyglutamate residues are formed by vitamin K dependent carboxylation. These residues are essential for the binding of calcium. Expressed by the venom gland.

It localises to the secreted. It carries out the reaction Selective cleavage of Arg-|-Thr and then Arg-|-Ile bonds in prothrombin to form thrombin.. Functionally, snake prothrombin activator that attacks the hemostatic system of prey. This protein is functionally similar to blood coagulation factor Xa. The polypeptide is Venom prothrombin activator notecarin-D1 (Notechis scutatus scutatus (Mainland tiger snake)).